The following is a 97-amino-acid chain: Large ribosomal subunit protein eL30 (97 aa).

Belongs to the eukaryotic ribosomal protein eL30 family.

This is Large ribosomal subunit protein eL30 from Methanoregula boonei (strain DSM 21154 / JCM 14090 / 6A8).